The primary structure comprises 428 residues: Enolase (428 aa).

Gln-163 serves as a coordination point for (2R)-2-phosphoglycerate. Catalysis depends on Glu-205, which acts as the Proton donor. Positions 243, 286, and 313 each coordinate Mg(2+). (2R)-2-phosphoglycerate contacts are provided by Lys-338, Arg-367, Ser-368, and Lys-389. The Proton acceptor role is filled by Lys-338.

Belongs to the enolase family. Mg(2+) serves as cofactor.

The protein localises to the cytoplasm. It is found in the secreted. The protein resides in the cell surface. It catalyses the reaction (2R)-2-phosphoglycerate = phosphoenolpyruvate + H2O. It participates in carbohydrate degradation; glycolysis; pyruvate from D-glyceraldehyde 3-phosphate: step 4/5. In terms of biological role, catalyzes the reversible conversion of 2-phosphoglycerate (2-PG) into phosphoenolpyruvate (PEP). It is essential for the degradation of carbohydrates via glycolysis. This Polaromonas naphthalenivorans (strain CJ2) protein is Enolase.